The primary structure comprises 158 residues: Protein-export protein SecB (158 aa).

This sequence belongs to the SecB family. Homotetramer, a dimer of dimers. One homotetramer interacts with 1 SecA dimer.

Its subcellular location is the cytoplasm. In terms of biological role, one of the proteins required for the normal export of preproteins out of the cell cytoplasm. It is a molecular chaperone that binds to a subset of precursor proteins, maintaining them in a translocation-competent state. It also specifically binds to its receptor SecA. The polypeptide is Protein-export protein SecB (Pectobacterium atrosepticum (strain SCRI 1043 / ATCC BAA-672) (Erwinia carotovora subsp. atroseptica)).